The chain runs to 460 residues: 2-methylcitrate synthase, mitochondrial (460 aa).

The transit peptide at 1 to 24 (MALPLRTARHASRLAQTIGRRGYA) directs the protein to the mitochondrion. 2 residues coordinate CoA: Arg-69 and Lys-187. Residue His-264 participates in oxaloacetate binding. Leu-299 lines the CoA pocket. The active site involves His-300. The CoA site is built by Val-341, Gly-343, and Tyr-344. Positions 346 and 355 each coordinate oxaloacetate. His-346 is an active-site residue. CoA contacts are provided by Thr-395, Lys-396, and Asn-401. Asp-403 is an active-site residue. The oxaloacetate site is built by Arg-429 and Arg-449.

It belongs to the citrate synthase family. Homodimer.

Its subcellular location is the mitochondrion matrix. It carries out the reaction propanoyl-CoA + oxaloacetate + H2O = (2S,3S)-2-methylcitrate + CoA + H(+). It catalyses the reaction oxaloacetate + acetyl-CoA + H2O = citrate + CoA + H(+). Its pathway is organic acid metabolism; propanoate degradation. With respect to regulation, partially inhibited by ATP. Functionally, catalyzes the synthesis of (2S,3S)-2-methylcitrate from propionyl-CoA and oxaloacetate and also from acetyl-CoA and oxaloacetate with a greater efficiency. Also has citrate synthase activity and can substitute for the loss of citA activity. This Emericella nidulans (strain FGSC A4 / ATCC 38163 / CBS 112.46 / NRRL 194 / M139) (Aspergillus nidulans) protein is 2-methylcitrate synthase, mitochondrial.